The following is a 224-amino-acid chain: Large ribosomal subunit protein uL1 (224 aa).

It belongs to the universal ribosomal protein uL1 family. As to quaternary structure, part of the 50S ribosomal subunit.

Functionally, binds directly to 23S rRNA. The L1 stalk is quite mobile in the ribosome, and is involved in E site tRNA release. Its function is as follows. Protein L1 is also a translational repressor protein, it controls the translation of the L11 operon by binding to its mRNA. The polypeptide is Large ribosomal subunit protein uL1 (Borrelia duttonii (strain Ly)).